Reading from the N-terminus, the 148-residue chain is Aspartate carbamoyltransferase regulatory chain (148 aa).

Zn(2+) contacts are provided by cysteine 106, cysteine 111, cysteine 134, and cysteine 137.

It belongs to the PyrI family. In terms of assembly, contains catalytic and regulatory chains. It depends on Zn(2+) as a cofactor.

Functionally, involved in allosteric regulation of aspartate carbamoyltransferase. The sequence is that of Aspartate carbamoyltransferase regulatory chain from Methanococcus maripaludis (strain DSM 14266 / JCM 13030 / NBRC 101832 / S2 / LL).